We begin with the raw amino-acid sequence, 344 residues long: UDP-3-O-acylglucosamine N-acyltransferase (344 aa).

Catalysis depends on H248, which acts as the Proton acceptor.

This sequence belongs to the transferase hexapeptide repeat family. LpxD subfamily. Homotrimer.

It catalyses the reaction a UDP-3-O-[(3R)-3-hydroxyacyl]-alpha-D-glucosamine + a (3R)-hydroxyacyl-[ACP] = a UDP-2-N,3-O-bis[(3R)-3-hydroxyacyl]-alpha-D-glucosamine + holo-[ACP] + H(+). Its pathway is bacterial outer membrane biogenesis; LPS lipid A biosynthesis. Functionally, catalyzes the N-acylation of UDP-3-O-acylglucosamine using 3-hydroxyacyl-ACP as the acyl donor. Is involved in the biosynthesis of lipid A, a phosphorylated glycolipid that anchors the lipopolysaccharide to the outer membrane of the cell. In Synechocystis sp. (strain ATCC 27184 / PCC 6803 / Kazusa), this protein is UDP-3-O-acylglucosamine N-acyltransferase.